The sequence spans 303 residues: Zinc transporter ZIP9 (303 aa).

Residues 7 to 27 form a helical membrane-spanning segment; sequence ISLLSLAMLVGCYVSGIIPLA. Asparagine 29 is a glycosylation site (N-linked (GlcNAc...) asparagine). 5 consecutive transmembrane segments (helical) span residues 35-55, 102-122, 142-162, 172-192, and 206-226; these read LKLVTVLGAGLLCGTALAVIV, AYIGVSLVLGFVFMLLVDQIG, ITTTLGLVVHAAADGVALGAA, LIVFVAIMLHKAPAAFGLVSF, and HLLVFALAAPVLSMLTYLGLS. An N-linked (GlcNAc...) asparagine glycan is attached at asparagine 237. Transmembrane regions (helical) follow at residues 240 to 260 and 282 to 302; these read GVAMLFSAGTFLYVATVHVLP and LEVCALVLGCLIPLVLSIGHQ.

This sequence belongs to the ZIP transporter (TC 2.A.5) family.

Its subcellular location is the golgi apparatus. It is found in the trans-Golgi network membrane. The protein localises to the cell membrane. The protein resides in the cytoplasm. It localises to the perinuclear region. Its subcellular location is the mitochondrion. It is found in the nucleus. The enzyme catalyses Zn(2+)(in) = Zn(2+)(out). Its function is as follows. Transports zinc ions across cell and organelle membranes into the cytoplasm and regulates intracellular zinc homeostasis. Participates in the zinc ions efflux out of the secretory compartments. Also functions as a membrane androgen receptor that mediates, through a G protein, the non-classical androgen signaling pathway, characterized by the activation of MAPK3/MAPK1 (Erk1/2) and transcription factors CREB1 or ATF1. Moreover, has dual functions as a membrane-bound androgen receptor and as an androgen-dependent zinc transporter both of which are mediated through an inhibitory G protein (Gi) that mediates both MAP kinase and zinc signaling leading to the androgen-dependent apoptotic process. This Xenopus tropicalis (Western clawed frog) protein is Zinc transporter ZIP9.